A 426-amino-acid chain; its full sequence is Methylamine dehydrogenase heavy chain (426 aa).

The N-terminal stretch at 1–31 (MASARESTPRYLTLIGATLACSALALGAAQA) is a signal peptide. A disordered region spans residues 32 to 64 (QTEPAEPEAPAETAAADAAGQTEGQRGAAEAAA). Cys221 and Cys236 are oxidised to a cystine.

Belongs to the aromatic amine dehydrogenase heavy chain family. Tetramer of two light and two heavy chains.

It localises to the periplasm. The catalysed reaction is 2 oxidized [amicyanin] + methylamine + H2O = 2 reduced [amicyanin] + formaldehyde + NH4(+) + 2 H(+). Methylamine dehydrogenase carries out the oxidation of methylamine. Electrons are passed from methylamine dehydrogenase to amicyanin. This Paracoccus versutus (Thiobacillus versutus) protein is Methylamine dehydrogenase heavy chain (mauB).